We begin with the raw amino-acid sequence, 196 residues long: MAEAERIIGMPENPDVDGTDEGGSTAADAAVNAGRGKRKILALLSVAVVAYLLDLGSKMLVVAKLEHQPPIDIIGDWLQFRAIRNPGAAFGIGEAFTVIFTIIATGVIVVIFRIARKLYSLPWAIALGLLLGGALGNLTDRIFRAPGVFEGAVVDFIAPKNSAVFNLADSAIVCGGILIVILSFKGLDPDGTVHKD.

The disordered stretch occupies residues 1–24 (MAEAERIIGMPENPDVDGTDEGGS). Helical transmembrane passes span 40–60 (ILALLSVAVVAYLLDLGSKML), 92–112 (IGEAFTVIFTIIATGVIVVIF), and 118–138 (LYSLPWAIALGLLLGGALGNL). Catalysis depends on residues D155 and D169. The chain crosses the membrane as a helical span at residues 164–184 (VFNLADSAIVCGGILIVILSF).

Belongs to the peptidase A8 family.

Its subcellular location is the cell membrane. The enzyme catalyses Release of signal peptides from bacterial membrane prolipoproteins. Hydrolyzes -Xaa-Yaa-Zaa-|-(S,diacylglyceryl)Cys-, in which Xaa is hydrophobic (preferably Leu), and Yaa (Ala or Ser) and Zaa (Gly or Ala) have small, neutral side chains.. Its pathway is protein modification; lipoprotein biosynthesis (signal peptide cleavage). Functionally, this protein specifically catalyzes the removal of signal peptides from prolipoproteins. The protein is Lipoprotein signal peptidase of Streptomyces griseus subsp. griseus (strain JCM 4626 / CBS 651.72 / NBRC 13350 / KCC S-0626 / ISP 5235).